A 485-amino-acid chain; its full sequence is MIRNDTMLKGQFVLKKTQIALSAALMGSVLLTGCVTQKSNTESNGPKDTQVSYVEYFADNAVGNPLAIVQHPAAIHKNGITYVSYQGPKEDPFVATYNHSTKEWSGPFKAGTSELGRRDGGKKFDNHGKPTMLIDDEGYVHIFYGGHGGHSSNGKNPLGNTHFGANKHAVSKKPYDITQWEDLDNITPFGTYNQVVKMDNGDIYLFFRHGAHRSDWVYQKSVDNGRTFSSPVSFLKHKRRTDIEAVDSWYAWVGKGEGDNLIVSYDYHVCWDGGAGINGRGHTTERHDVYFMNFNTKTNQWSNVEGESLALPVTKEVADDKTLAMKTGALWTFNGTSHLDNEGHPHIAINAGVDRGAKTGGPKQTRHVWWDGKKWLGGNNIIEGYQGVSRGDFRVTDPSDIRYLVTYEKEGDAVLSWWDSDEDGNAFSEGSTVLRKNNATFAISALIENAHPEAQMLVAEKESDENIKIYLVGEDGPVPRALSNL.

A signal peptide spans 1–33 (MIRNDTMLKGQFVLKKTQIALSAALMGSVLLTG). A lipid anchor (N-palmitoyl cysteine) is attached at cysteine 34. The S-diacylglycerol cysteine moiety is linked to residue cysteine 34. 2 residues coordinate substrate: asparagine 64 and asparagine 126. A disordered region spans residues 108 to 128 (FKAGTSELGRRDGGKKFDNHG). Positions 115–128 (LGRRDGGKKFDNHG) are enriched in basic and acidic residues. Histidine 127 functions as the Proton donor in the catalytic mechanism. 2 residues coordinate substrate: lysine 129 and histidine 147. Residue tyrosine 192 is the Proton acceptor of the active site. Substrate is bound by residues arginine 208, histidine 212, and tyrosine 250. Residue histidine 212 participates in Zn(2+) binding. Zn(2+) contacts are provided by histidine 268, cysteine 270, and histidine 282. Position 282 (histidine 282) interacts with substrate.

It belongs to the polysaccharide lyase 25 family.

It localises to the cell membrane. Ulvan lyase involved in ulvan degradation. Ulvan is the main polysaccharide component of the Ulvales (green seaweed) cell wall. It is composed of disaccharide building blocks comprising 3-sulfated rhamnose (Rha3S) linked to D-glucuronic acid (GlcA), L-iduronic acid (IduA), or D-xylose (Xyl). Ulvan lyase catalyzes the endolytic cleavage of the glycosidic bond between Rha3S and the uronic acids GlcA or IduA, producing oligosaccharides that have unsaturated 4-deoxy-L-threo-hex-4-enopyranosiduronic acid (deltaUA) at the non-reducing end. This results eventually in the degradation of the ulvan polysaccharide into deltaUA-Rha3S disaccharides and deltaUA-Rha3S-Xyl-Rha3S tetrasaccharides. This Alteromonas sp. (strain LOR) protein is Ulvan lyase.